The chain runs to 144 residues: Protein cornichon (144 aa).

Topologically, residues 1 to 10 are lumenal; sequence MAFNFTAFTY. The interval 1 to 57 is interaction with grk; sequence MAFNFTAFTYIVALIGDAFLIFFAIFHVIAFDELKTDYKNPIDQCNSLNPLVLPEYL. Residues 11–31 form a helical membrane-spanning segment; sequence IVALIGDAFLIFFAIFHVIAF. The Cytoplasmic segment spans residues 32–56; it reads DELKTDYKNPIDQCNSLNPLVLPEY. Residues 57 to 77 traverse the membrane as a helical segment; the sequence is LLHLFLNLLFLFCGEWYSLCL. Topologically, residues 78–122 are lumenal; sequence NIPLIAYHIWRYKNRPLMSGPGLYDPTTVLKTDTLSRNLREGWIK. A helical transmembrane segment spans residues 123–143; sequence LAVYLISFFYYIYGMVYSLIS. Residue threonine 144 is a topological domain, cytoplasmic.

This sequence belongs to the cornichon family. As to quaternary structure, interacts with grk.

Its subcellular location is the endoplasmic reticulum membrane. Acts as a cargo receptor necessary for the transportation of gurken (grk) to a transitional endoplasmic reticulum (tER) site and promotes its incorporation into coat protein complex II (COPII) vesicles. Associated with gurken, produces a signal received by torpedo resulting in a signaling pathway that first establishes posterior follicle cell fates and normal localization of the anterior and posterior determinants, later they act in a signaling event inducing dorsal follicle cell fates and regulating the dorsal-ventral pattern of egg and embryo. The sequence is that of Protein cornichon (cni) from Drosophila virilis (Fruit fly).